The following is a 419-amino-acid chain: Inward rectifier potassium channel 16 (419 aa).

The Cytoplasmic segment spans residues 1–67; that stretch reads MSYYGSSYRI…MVDIFTTLVD (67 aa). A helical transmembrane segment spans residues 68 to 94; the sequence is TKWRHMFVVFSLSYILSWLIFGSIFWL. Topologically, residues 95-117 are extracellular; that stretch reads IALHHGDLLSDPDITPCVDNVHS. The segment at residues 118-134 is an intramembrane region (helical; Pore-forming); the sequence is FTAAFLFSLETQTTIGY. Residues 131 to 136 carry the Selectivity filter motif; that stretch reads TIGYGY. At 135–143 the chain is on the extracellular side; it reads GYRCVTEEC. A helical membrane pass occupies residues 144–171; that stretch reads SVAVLTVILQSILSCIINTFIIGAALAK. Topologically, residues 172–419 are cytoplasmic; the sequence is MATARKRAQT…LNRISMESQM (248 aa). Phosphoserine is present on residues S358, S374, and S376.

It belongs to the inward rectifier-type potassium channel (TC 1.A.2.1) family. KCNJ16 subfamily. It forms heteromeric channels with Kir4.1/KCNJ10; this interaction is required for KCNJ16 localization to the basolateral membrane in kidney cells. As a heteromer with KCNJ10, may interact with MAGI1; this interaction may facilitate KCNJ10/KCNJ16 potassium channel expression at the basolateral membrane in kidney cells. May form heteromers with Kir2.1/KCNJ2. Can form heteromeric channels with Kir4.2/KCNJ15. As to expression, expressed in the brain, testis, liver, spleen, kidney, submaxillary gland and adrenals. In the kidney, expressed in the epithelial cells of both proximal and distal convoluted tubules, in the endothelial cells surrounding glomerular capillaries and in the flattened parietal layer of Bowman's capsule.

It localises to the membrane. The protein localises to the basolateral cell membrane. The catalysed reaction is K(+)(in) = K(+)(out). Channel activity is strongly regulated by variations of cytosolic pH; channels are activated by alkaline and inhibited by acidic pH values. Activated by phosphatidylinositol 4,5 biphosphate (PtdIns(4,5)P2). Functionally, inward rectifier potassium channels are characterized by a greater tendency to allow potassium to flow into the cell rather than out of it. Their voltage dependence is regulated by the concentration of extracellular potassium; as external potassium is raised, the voltage range of the channel opening shifts to more positive voltages. The inward rectification is mainly due to the blockage of outward current by internal magnesium. KCNJ16 may be involved in the regulation of fluid and pH balance. In the kidney, together with KCNJ10, mediates basolateral K(+) recycling in distal tubules; this process is critical for Na(+) reabsorption at the tubules. This is Inward rectifier potassium channel 16 (Kcnj16) from Rattus norvegicus (Rat).